The primary structure comprises 557 residues: Myo-inositol transporter 2 (557 aa).

Residues 1 to 76 (MDFNNIPLAT…ENGEGFEAEK (76 aa)) are Cytoplasmic-facing. The tract at residues 24 to 69 (EMTTRPSETKKKVPFSEDMREIPSLPNEEEANATDPQANEVADENG) is disordered. Positions 30-44 (SETKKKVPFSEDMRE) are enriched in basic and acidic residues. A helical membrane pass occupies residues 77 to 97 (ISSWIWVLSAVAGISGLLFGY). Residues 98 to 99 (DT) lie on the Extracellular side of the membrane. Residues 100–120 (GVISGALAVLGSDLGHVLSSG) form a helical membrane-spanning segment. Over 121–123 (QKE) the chain is Cytoplasmic. The helical transmembrane segment at 124-144 (LITSATSFAALISATTSGWLA) threads the bilayer. Residues 145 to 157 (DWVGRKRLLLCAD) lie on the Extracellular side of the membrane. Residues 158–178 (AIFVIGSVIMAASRNVAMMVV) traverse the membrane as a helical segment. The Cytoplasmic segment spans residues 179 to 180 (GR). Residues 181 to 201 (FIVGYGIGLTSLIVPMYITEL) traverse the membrane as a helical segment. At 202–209 (APARLRGR) the chain is on the extracellular side. A helical transmembrane segment spans residues 210–230 (LVIIYVVFITGGQLIAYSLNA). Topologically, residues 231 to 240 (AFEHVHQGWR) are cytoplasmic. A helical transmembrane segment spans residues 241–261 (IMFGIGAAPALGQLISLFWTP). The Extracellular segment spans residues 262–367 (ESPRYLLRHN…IFQSVGFKNS (106 aa)). A helical membrane pass occupies residues 368–388 (ISVSIVVGATNFVFTIVAFMF). Residues 389–396 (IDRIGRRR) are Cytoplasmic-facing. Residues 397 to 417 (ILLCTSAVMIAGLALCAIAYH) traverse the membrane as a helical segment. Residues 418 to 432 (FLPADTTQNTNSGWQ) are Extracellular-facing. The chain crosses the membrane as a helical span at residues 433 to 453 (YVVLASIIIFLASYASGIGNI). Residues 454–468 (PWQQAELFPMEVRAL) lie on the Cytoplasmic side of the membrane. The helical transmembrane segment at 469–489 (GAGFSTAINWVGNLIISASFL) threads the bilayer. Residues 490–498 (TMMESITPT) lie on the Extracellular side of the membrane. The helical transmembrane segment at 499-519 (GTFALFAGFCFVGLVTSYFTY) threads the bilayer. Residues 520–557 (PELAGMSIENIHKLLEKGFWQAVKESTKRVRKGRIDEA) are Cytoplasmic-facing.

It belongs to the major facilitator superfamily. Sugar transporter (TC 2.A.1.1) family.

It localises to the membrane. The catalysed reaction is myo-inositol(out) + H(+)(out) = myo-inositol(in) + H(+)(in). Functionally, transporter for myo-inositol. This chain is Myo-inositol transporter 2 (itr2), found in Schizosaccharomyces pombe (strain 972 / ATCC 24843) (Fission yeast).